Consider the following 323-residue polypeptide: MGVLEDLVARAGGCAVIDGGFATQLEALGADINDPLWSAACLITRPHLVKEVHMQYLEAGADVIISSSYQATIPGFIARGMSVAEAEDLLRTSVKLANEARDEFWKSTLRKSKPIYNRALVAASIGSYGAYLADGSEYSGSYGADITAEKLKDFHRRRLQVLASAGPDLIAFEAIPNQMEAQALVELLEEEKVQIPSWICFSSVDGKNLCSGESFADCLKILNASEKVAVVGVNCTPPQFIEGIICEFRKQTKKAIAVYPNSGEVWDGRAKRWLPVECLGHKSFDALAKRWQEAGASLIGGCCRTTPSTIRAVSKILKGRTGH.

Positions valine 3–leucine 317 constitute a Hcy-binding domain. Residues cysteine 235, cysteine 302, and cysteine 303 each contribute to the Zn(2+) site.

Monomer. Requires Zn(2+) as cofactor.

The catalysed reaction is S-methyl-L-methionine + L-homocysteine = 2 L-methionine + H(+). Functionally, catalyzes methyl transfer from S-methylmethionine (SMM) to adenosyl-L-homocysteine (AdoMet). SMM degradation (by HMT-1, HMT-2, HMT-3 and HMT-4) and biosynthesis (by MMT1) constitute the SMM cycle in plants, which is probably required to achieve short term control of AdoMet level. This is Homocysteine S-methyltransferase 1 (HMT-1) from Zea mays (Maize).